Reading from the N-terminus, the 138-residue chain is MYTLYILSLLCAFVTFSECKYPPGPIYPHRPIYPIQPVYPDHCPGVCYIACPNGNIHDRNGCPICRCRPDECTLPRKIGPCRASIPRYYFNFVTKRCELFFWGGCQPNKNNFETIYDCQGYCGYAERRYPYPYVKRTY.

An N-terminal signal peptide occupies residues 1 to 19 (MYTLYILSLLCAFVTFSEC). Positions 72-122 (CTLPRKIGPCRASIPRYYFNFVTKRCELFFWGGCQPNKNNFETIYDCQGYC) constitute a BPTI/Kunitz inhibitor domain. 3 disulfides stabilise this stretch: Cys72/Cys122, Cys81/Cys105, and Cys97/Cys118.

In terms of tissue distribution, prismatic layer of shell (at protein level). Expressed primarily in the mantle with highest level in the mantle edge and lower level in the mantle pallium.

The protein resides in the secreted. This chain is BPTI/Kunitz domain-containing protein 1, found in Pinctada maxima (Silver-lipped pearl oyster).